Consider the following 24-residue polypeptide: Positive regulator of RepFIC repA1 expression (24 aa).

In Escherichia coli, this protein is Positive regulator of RepFIC repA1 expression (repL).